A 335-amino-acid chain; its full sequence is Tryptophan--tRNA ligase (335 aa).

ATP contacts are provided by residues 11 to 13 and 19 to 20; these read QPT and GN. The short motif at 12 to 20 is the 'HIGH' region element; that stretch reads PTGNLHLGN. Position 135 (Asp-135) interacts with L-tryptophan. ATP is bound by residues 147-149, Val-189, and 198-202; these read GED and KMSKS. Residues 198-202 carry the 'KMSKS' region motif; that stretch reads KMSKS.

The protein belongs to the class-I aminoacyl-tRNA synthetase family. Homodimer.

It localises to the cytoplasm. It carries out the reaction tRNA(Trp) + L-tryptophan + ATP = L-tryptophyl-tRNA(Trp) + AMP + diphosphate + H(+). Catalyzes the attachment of tryptophan to tRNA(Trp). This is Tryptophan--tRNA ligase from Nostoc sp. (strain PCC 7120 / SAG 25.82 / UTEX 2576).